Here is a 255-residue protein sequence, read N- to C-terminus: tRNA (guanine-N(7)-)-methyltransferase (255 aa).

The tract at residues 1–29 (MSDSDASRPSAIASDGPDAAGKHASGAPW) is disordered. The S-adenosyl-L-methionine site is built by Glu-86, Glu-111, Asp-138, and Asp-160. The active site involves Asp-160. Substrate-binding positions include Lys-164, Asp-196, and 233–236 (TRYE).

Belongs to the class I-like SAM-binding methyltransferase superfamily. TrmB family.

The enzyme catalyses guanosine(46) in tRNA + S-adenosyl-L-methionine = N(7)-methylguanosine(46) in tRNA + S-adenosyl-L-homocysteine. It participates in tRNA modification; N(7)-methylguanine-tRNA biosynthesis. Functionally, catalyzes the formation of N(7)-methylguanine at position 46 (m7G46) in tRNA. In Ruegeria sp. (strain TM1040) (Silicibacter sp.), this protein is tRNA (guanine-N(7)-)-methyltransferase.